The primary structure comprises 134 residues: 4-carboxymuconolactone decarboxylase (134 aa).

Belongs to the carboxymuconolactone decarboxylase family.

It catalyses the reaction (R)-2-(carboxymethyl)-5-oxo-2,5-dihydro-2-furoate + H(+) = (4,5-dihydro-5-oxofuran-2-yl)-acetate + CO2. The protein operates within aromatic compound metabolism; beta-ketoadipate pathway; 5-oxo-4,5-dihydro-2-furylacetate from 3-carboxy-cis,cis-muconate: step 2/2. This chain is 4-carboxymuconolactone decarboxylase (pcaC), found in Acinetobacter baylyi (strain ATCC 33305 / BD413 / ADP1).